Here is a 438-residue protein sequence, read N- to C-terminus: V-type ATP synthase beta chain (438 aa).

This sequence belongs to the ATPase alpha/beta chains family.

In terms of biological role, produces ATP from ADP in the presence of a proton gradient across the membrane. The V-type beta chain is a regulatory subunit. This Chlamydia pneumoniae (Chlamydophila pneumoniae) protein is V-type ATP synthase beta chain (atpB).